Reading from the N-terminus, the 287-residue chain is Bifunctional protein FolD (287 aa).

NADP(+) is bound by residues 166–168 and isoleucine 232; that span reads GAS.

It belongs to the tetrahydrofolate dehydrogenase/cyclohydrolase family. Homodimer.

The enzyme catalyses (6R)-5,10-methylene-5,6,7,8-tetrahydrofolate + NADP(+) = (6R)-5,10-methenyltetrahydrofolate + NADPH. It catalyses the reaction (6R)-5,10-methenyltetrahydrofolate + H2O = (6R)-10-formyltetrahydrofolate + H(+). It functions in the pathway one-carbon metabolism; tetrahydrofolate interconversion. Catalyzes the oxidation of 5,10-methylenetetrahydrofolate to 5,10-methenyltetrahydrofolate and then the hydrolysis of 5,10-methenyltetrahydrofolate to 10-formyltetrahydrofolate. The sequence is that of Bifunctional protein FolD from Aeromonas salmonicida (strain A449).